A 102-amino-acid chain; its full sequence is Large ribosomal subunit protein uL24 (102 aa).

The protein belongs to the universal ribosomal protein uL24 family. As to quaternary structure, part of the 50S ribosomal subunit.

In terms of biological role, one of two assembly initiator proteins, it binds directly to the 5'-end of the 23S rRNA, where it nucleates assembly of the 50S subunit. Its function is as follows. One of the proteins that surrounds the polypeptide exit tunnel on the outside of the subunit. The sequence is that of Large ribosomal subunit protein uL24 from Alcanivorax borkumensis (strain ATCC 700651 / DSM 11573 / NCIMB 13689 / SK2).